Consider the following 1034-residue polypeptide: Platelet endothelial aggregation receptor 1 (1034 aa).

Residues 1–18 (MPLCPLLLLALGLRLTGT) form the signal peptide. At 19–754 (LNSNDPNVCT…PTSPVTHNSL (736 aa)) the chain is on the extracellular side. Residues 23–101 (DPNVCTFWES…YYESRGACVP (79 aa)) enclose the EMI domain. Cystine bridges form between Cys-27-Cys-89, Cys-53-Cys-63, and Cys-88-Cys-99. Asn-150 is a glycosylation site (N-linked (GlcNAc...) asparagine). EGF-like domains lie at 181–215 (YGPACQFDCQCYGASCDPQDGACFCPPGRAGPSCN), 223–258 (DGFFCPRTYPCQNGGVPQGSQGSCSCPPGWMGVICS), 266–301 (HGPNCTQECRCHNGGLCDRFTGQCHCAPGYIGDRCQ), 309–344 (FGQDCAETCDCAPGARCFPANGACLCEHGFTGDRCT), and 398–433 (HGPGCQEHCLCLHGGLCLADSGLCRCAPGYTGPHCA). Disulfide bonds link Cys-185/Cys-196, Cys-189/Cys-203, Cys-205/Cys-214, Cys-233/Cys-246, and Cys-248/Cys-257. Residue Asn-269 is glycosylated (N-linked (GlcNAc...) asparagine). Cystine bridges form between Cys-270–Cys-282, Cys-276–Cys-289, Cys-291–Cys-300, Cys-313–Cys-325, Cys-319–Cys-332, Cys-334–Cys-343, Cys-402–Cys-414, Cys-408–Cys-421, and Cys-423–Cys-432. N-linked (GlcNAc...) asparagine glycosylation occurs at Asn-474. EGF-like domains lie at 484–519 (WGFNCNASCQCAHDGVCSPQTGACTCTPGWHGAHCQ), 575–605 (SNTCTCKNGGTCVSENGNCVCAPGFRGPSCQ), 613–648 (YGKRCVQCKCNNNHSSCHPSDGTCSCLAGWTGPDCS), and 656–691 (WGLKCSQLCQCHHGGTCHPQDGSCICTPGWTGPNCL). Intrachain disulfides connect Cys-488–Cys-500, Cys-494–Cys-507, Cys-509–Cys-518, Cys-578–Cys-586, Cys-580–Cys-593, Cys-595–Cys-604, Cys-617–Cys-629, Cys-622–Cys-636, Cys-638–Cys-647, Cys-660–Cys-672, Cys-666–Cys-679, and Cys-681–Cys-690. Residues 755–775 (GAVIGIAVLGTLVVALIALFI) traverse the membrane as a helical segment. Residues 776–1034 (GYRQWQKGKE…PSPPSRRQDR (259 aa)) are Cytoplasmic-facing. Positions 823-883 (TLSQCSPNPP…PHERGASHLD (61 aa)) are disordered. Positions 851 to 883 (RPSRAHGRENHVTLPADWKHRREPHERGASHLD) are enriched in basic and acidic residues. Tyr-923 is modified (phosphotyrosine). The tract at residues 925 to 1034 (TIRDLPSLPG…PSPPSRRQDR (110 aa)) is disordered. Ser-951 is modified (phosphoserine). Polar residues predominate over residues 972 to 991 (DSGTYEQPSPLSHNEESLGS). Phosphoserine is present on Ser-1026.

The protein belongs to the MEGF family. In terms of assembly, interacts with SHC2 upon its aggregation-induced tyrosine phosphorylation. Interacts (via extracellular domain) with SVEP1. Post-translationally, phosphorylated in the intracellular domain on tyrosine residues. Phosphorylated on tyrosine residues by SRC. Tyrosine phosphorylation is detected upon platelet aggregation stimulated by collagen, TRAP and thrombin and platelet-platelet contacts but not after platelet activation. Tyrosine phosphorylation enhanced its association with SHC1 and SHC2. Phosphorylated in the intracellular domain on tyrosine residues. Phosphorylated when in the presence of SVEP1. As to expression, expressed in thymocytes, bone marrow stromal and osteogenic cells (at protein level). Strongly expressed in kidney and heart. Moderately expressed in lung, spleen, thymus, liver, brain, testis, skin and stomach. Expressed in hematopoietic stem progenitor cells.

The protein localises to the cell membrane. It localises to the cell projection. Its subcellular location is the lamellipodium. In terms of biological role, required for SVEP1-mediated platelet activation, via its interaction with SVEP1 and subsequent activation of AKT/mTOR signaling. May be involved in the early stages of hematopoiesis. In Mus musculus (Mouse), this protein is Platelet endothelial aggregation receptor 1 (Pear1).